The chain runs to 167 residues: UPF0262 protein Nwi_0248 (167 aa).

It belongs to the UPF0262 family.

The protein is UPF0262 protein Nwi_0248 of Nitrobacter winogradskyi (strain ATCC 25391 / DSM 10237 / CIP 104748 / NCIMB 11846 / Nb-255).